A 180-amino-acid chain; its full sequence is MGDPKRQRKKYETPSHPWIKERLDRERVLKRKYALKNKKELWRHETQLKEFRRRARRLLAARGKQAEIERQQLLQRLHRLGLLPADAALDDVLSLTVEDVLERRLQTLVYKKGLARTIRQARQLIVHGHIEVNGQIIRSPGYLVLREEEDTITYAKNSPFAKESHPERMVIEQAKQGGEA.

The 63-residue stretch at 103–165 folds into the S4 RNA-binding domain; it reads RRLQTLVYKK…KNSPFAKESH (63 aa).

The protein belongs to the universal ribosomal protein uS4 family. Part of the 30S ribosomal subunit. Contacts protein S5. The interaction surface between S4 and S5 is involved in control of translational fidelity.

Its function is as follows. One of the primary rRNA binding proteins, it binds directly to 16S rRNA where it nucleates assembly of the body of the 30S subunit. In terms of biological role, with S5 and S12 plays an important role in translational accuracy. The polypeptide is Small ribosomal subunit protein uS4 (Thermococcus gammatolerans (strain DSM 15229 / JCM 11827 / EJ3)).